The primary structure comprises 147 residues: Mineralocorticoid receptor (147 aa).

In terms of domain architecture, NR LBD spans 1–147; the sequence is FALSWRSYKH…SQALKVEFPA (147 aa). 21-hydroxyprogesterone-binding residues include R6 and T134. Aldosterone is bound by residues R6 and T134. Progesterone-binding residues include R6 and T134.

This sequence belongs to the nuclear hormone receptor family. NR3 subfamily.

The protein localises to the cytoplasm. It localises to the nucleus. In terms of biological role, receptor for both mineralocorticoids (MC) such as aldosterone and glucocorticoids (GC) such as corticosterone or cortisol. Binds to mineralocorticoid response elements (MRE) and transactivates target genes. The effect of MC is to increase ion and water transport and thus raise extracellular fluid volume and blood pressure and lower potassium levels. This is Mineralocorticoid receptor (NR3C2) from Gallus gallus (Chicken).